The following is a 464-amino-acid chain: MAEGNVGKLVQIIGPVIDIRFSRENLPNLLNAIEIEGPDGKIVVEVSQHIGDDTVRCVAMKSTDGLVRGMEAKDTGGPITVPVGRATLGRIFNVIGEPVDEKGAVAAEAKAPIHRPAPSFEDQATSTEILETGIKVVDLIAPYLKGGKIGLFGGAGVGKTVLIMELINNIAKEHGGLSVFSGVGERTREGNDLYNEMIESGVIDKTALVYGQMNEPPGARMRVGLTGLTMAEHFRDEEGQDVLLFIDNIFRFTQAGSEVSALLGRMPSAVGYQPTLATEMGALQERITSTRKGSITSVQAVYVPADDLTDPAPATTFAHLDATTVLSRQIVELGIYPAVDPLDSNSRVLDPAIVGDEHYSVARGVQEVLQRYKELQDIIAILGMDELSDEDKLTVSRARKIQRFLSQPFSVAEQFTGMAGKYVPLKETIRGFKEILEGKHDDIPESAFLFVGSIDEAVEKAKGK.

153-160 (GGAGVGKT) contributes to the ATP binding site.

It belongs to the ATPase alpha/beta chains family. F-type ATPases have 2 components, CF(1) - the catalytic core - and CF(0) - the membrane proton channel. CF(1) has five subunits: alpha(3), beta(3), gamma(1), delta(1), epsilon(1). CF(0) has three main subunits: a(1), b(2) and c(9-12). The alpha and beta chains form an alternating ring which encloses part of the gamma chain. CF(1) is attached to CF(0) by a central stalk formed by the gamma and epsilon chains, while a peripheral stalk is formed by the delta and b chains.

Its subcellular location is the cell membrane. It catalyses the reaction ATP + H2O + 4 H(+)(in) = ADP + phosphate + 5 H(+)(out). Functionally, produces ATP from ADP in the presence of a proton gradient across the membrane. The catalytic sites are hosted primarily by the beta subunits. In Alkaliphilus oremlandii (strain OhILAs) (Clostridium oremlandii (strain OhILAs)), this protein is ATP synthase subunit beta.